Here is a 164-residue protein sequence, read N- to C-terminus: C-type natriuretic peptide (164 aa).

An N-terminal signal peptide occupies residues 1-23 (MVASRLAAGGLLLLALLALALDG). 2 disordered regions span residues 24–93 (KPAP…AAAA) and 115–134 (HPEH…GASR). Positions 24–142 (KPAPPQPLRK…SRRLKGVAKK (119 aa)) are excised as a propeptide. Residues 58 to 67 (AGGGGGGGRS) are compositionally biased toward gly residues. Residues 68–93 (GSKAANAAPTAPKSKGGAAAAAAAAA) show a composition bias toward low complexity. The segment covering 121 to 132 (GGGGGGGGGGGA) has biased composition (gly residues). Residues Cys-148 and Cys-164 are joined by a disulfide bond.

It belongs to the natriuretic peptide family. In terms of tissue distribution, expressed by the venom gland.

Its subcellular location is the secreted. Functionally, snake venom natriuretic peptide that has a vasorelaxant activity in rat aortic strips and a diuretic potency in anesthetized rats. May act by activating natriuretic receptors (NPR1 and/or NPR2). The sequence is that of C-type natriuretic peptide from Philodryas olfersii (Green snake).